The chain runs to 397 residues: Enoyl-[acyl-carrier-protein] reductase [NADH] (397 aa).

NAD(+)-binding positions include 48 to 53, 74 to 75, 111 to 112, and 139 to 140; these read GASTGY, FE, DA, and VA. Residue Tyr225 participates in substrate binding. Tyr235 acts as the Proton donor in catalysis. NAD(+)-binding positions include Lys244 and 273 to 275; that span reads VVT.

It belongs to the TER reductase family. As to quaternary structure, monomer.

It catalyses the reaction a 2,3-saturated acyl-[ACP] + NAD(+) = a (2E)-enoyl-[ACP] + NADH + H(+). It participates in lipid metabolism; fatty acid biosynthesis. Functionally, involved in the final reduction of the elongation cycle of fatty acid synthesis (FAS II). Catalyzes the reduction of a carbon-carbon double bond in an enoyl moiety that is covalently linked to an acyl carrier protein (ACP). In Burkholderia pseudomallei (strain 1106a), this protein is Enoyl-[acyl-carrier-protein] reductase [NADH].